Consider the following 900-residue polypeptide: Phospholipase DDHD1 (900 aa).

Disordered stretches follow at residues 1–28 (MNYP…ELGS), 100–152 (LRYY…GGPA), and 202–233 (GARP…DEDR). A phosphoserine mark is found at S8 and S11. The segment covering 130–140 (SGGGGATGGSP) has biased composition (gly residues). S537 is a catalytic residue. The DDHD domain occupies 611 to 886 (LKFKVENFFC…ALFLLTFMYK (276 aa)). Disordered regions lie at residues 706–725 (AKEP…PSPV) and 768–801 (SSTT…TQTL). The segment covering 710 to 725 (TSVSENEGISTIPSPV) has biased composition (polar residues). At S723 the chain carries Phosphoserine. Over residues 776-787 (TSKDSMEDEKKP) the composition is skewed to basic and acidic residues. Positions 791–801 (PSATTVGTQTL) are enriched in polar residues.

This sequence belongs to the PA-PLA1 family. Forms homooligomers and, to a much smaller extent, heterooligomers with DDHD2. As to expression, highly expressed in testis. Also expressed in brain, spleen and lung. Only expressed in cerebellum in fetal brain.

The protein resides in the cytoplasm. It catalyses the reaction a 1,2-diacyl-sn-glycero-3-phosphate + H2O = a 2-acyl-sn-glycerol 3-phosphate + a fatty acid + H(+). The catalysed reaction is a 1,2-diacyl-sn-glycero-3-phospho-(1D-myo-inositol) + H2O = a 2-acyl-sn-glycero-3-phospho-D-myo-inositol + a fatty acid + H(+). The enzyme catalyses 1-octadecanoyl-2-(5Z,8Z,11Z,14Z-eicosatetraenoyl)-sn-glycero-3-phospho-(1D-myo-inositol) + H2O = 2-(5Z,8Z,11Z,14Z-eicosatetraenoyl)-sn-glycero-3-phospho-(1D-myo-inositol) + octadecanoate + H(+). It carries out the reaction a 1-acyl-2-(5Z,8Z,11Z,14Z-eicosatetraenoyl)-sn-glycero-3-phospho-(1D-myo-inositol) + H2O = 2-(5Z,8Z,11Z,14Z-eicosatetraenoyl)-sn-glycero-3-phospho-(1D-myo-inositol) + a fatty acid + H(+). It catalyses the reaction 1,2-dihexadecanoyl-sn-glycero-3-phospho-(1D-myo-inositol) + H2O = 2-hexadecanoyl-sn-glycero-3-phospho-(1D-myo-inositol) + hexadecanoate + H(+). The catalysed reaction is a 1-acyl-2-(5Z,8Z,11Z,14Z)-eicosatetraenoyl-sn-glycero-3-phosphate + H2O = 2-(5Z,8Z,11Z,14Z-eicosatetraenoyl)-sn-glycero-3-phosphate + a fatty acid + H(+). The enzyme catalyses 1,2-di-(9Z-octadecenoyl)-sn-glycero-3-phosphate + H2O = 2-(9Z-octadecenoyl)-sn-glycero-3-phosphate + (9Z)-octadecenoate + H(+). It carries out the reaction 1-hexadecanoyl-2-(9Z-octadecenoyl)-sn-glycero-3-phosphate + H2O = 2-(9Z-octadecenoyl)-sn-glycero-3-phosphate + hexadecanoate + H(+). It catalyses the reaction 1-hexadecanoyl-2-(9Z-octadecenoyl)-sn-glycero-3-phospho-L-serine + H2O = 2-(9Z-octadecenoyl)-sn-glycero-3-phospho-L-serine + hexadecanoate + H(+). The catalysed reaction is 1,2-di-(5Z,8Z,11Z,14Z)-eicosatetraenoyl-sn-glycero-3-phosphate + H2O = 2-(5Z,8Z,11Z,14Z-eicosatetraenoyl)-sn-glycero-3-phosphate + (5Z,8Z,11Z,14Z)-eicosatetraenoate + H(+). The enzyme catalyses 1-octadecanoyl-2-(5Z,8Z,11Z,14Z-eicosatetraenoyl)-sn-glycero-3-phosphate + H2O = 2-(5Z,8Z,11Z,14Z-eicosatetraenoyl)-sn-glycero-3-phosphate + octadecanoate + H(+). It carries out the reaction a 1,2-diacyl-sn-glycero-3-phosphocholine + H2O = a 2-acyl-sn-glycero-3-phosphocholine + a fatty acid + H(+). It catalyses the reaction a 1,2-diacyl-sn-glycero-3-phosphoethanolamine + H2O = a 2-acyl-sn-glycero-3-phosphoethanolamine + a fatty acid + H(+). The catalysed reaction is a 1,2-diacyl-sn-glycero-3-phospho-L-serine + H2O = a 2-acyl-sn-glycero-3-phospho-L-serine + a fatty acid + H(+). The enzyme catalyses a 1,2-diacyl-sn-glycero-3-phospho-(1'-sn-glycerol) + H2O = 2-acyl-sn-glycero-3-phospho-(1'-sn-glycerol) + a fatty acid + H(+). It carries out the reaction 1-hexadecanoyl-2-(9Z-octadecenoyl)-sn-glycero-3-phospho-(1'-sn-glycerol) + H2O = 2-(9Z-octadecenoyl)-sn-glycero-3-phospho-(1'-sn-glycerol) + hexadecanoate + H(+). It catalyses the reaction 1-acyl-2-(5Z,8Z,11Z,14Z-eicosatetraenoyl)-sn-glycero-3-phosphocholine + H2O = 2-(5Z,8Z,11Z,14Z)-eicosatetraenoyl-sn-glycero-3-phosphocholine + a fatty acid + H(+). The catalysed reaction is 1-acyl-2-(5Z,8Z,11Z,14Z)-eicosatetraenoyl-sn-glycero-3-phosphoethanolamine + H2O = 2-(5Z,8Z,11Z,14Z)-eicosatetraenoyl-sn-glycero-3-phosphoethanolamine + a fatty acid + H(+). The enzyme catalyses 1-(9Z-octadecenoyl)-2-(7Z,10Z,13Z,16Z,19Z-docosapentaenoyl)-sn-glycero-3-phospho-1D-myo-inositol + H2O = 2-(7Z,10Z,13Z,16Z,19Z-docosapentaenoyl)-sn-glycero-3-phospho-1D-myo-inositol + (9Z)-octadecenoate + H(+). It carries out the reaction 1-(9Z-octadecenoyl)-2-(5Z,8Z,11Z,14Z-eicosatetraenoyl)-sn-glycero-3-phospho-1D-myo-inositol + H2O = 2-(5Z,8Z,11Z,14Z-eicosatetraenoyl)-sn-glycero-3-phospho-(1D-myo-inositol) + (9Z)-octadecenoate + H(+). It catalyses the reaction 1,2-di-(9Z-octadecenoyl)-sn-glycero-3-phospho-1D-myo-inositol + H2O = 2-(9Z-octadecenoyl)-sn-glycero-3-phospho-1D-myo-inositol + (9Z)-octadecenoate + H(+). The catalysed reaction is 1-(9Z-octadecenoyl)-2-(8Z,11Z,14Z-eicosatrienoyl)-sn-glycero-3-phospho-1D-myo-inositol + H2O = 2-(8Z,11Z,14Z-eicosatrienoyl)-sn-glycero-3-phospho-1D-myo-inositol + (9Z)-octadecenoate + H(+). The enzyme catalyses 1,2-di-(9Z-octadecenoyl)-sn-glycero-3-phosphocholine + H2O = (9Z-octadecenoyl)-sn-glycero-3-phosphocholine + (9Z)-octadecenoate + H(+). It functions in the pathway phospholipid metabolism; phosphatidylinositol metabolism. Its activity is regulated as follows. Phosphatidate (1,2-diacyl-sn-glycero-3-phosphate, PA) can positively regulate phospholipase A1 activity. In terms of biological role, phospholipase A1 (PLA1) that hydrolyzes ester bonds at the sn-1 position of glycerophospholipids producing a free fatty acid and a lysophospholipid. Prefers phosphatidate (1,2-diacyl-sn-glycero-3-phosphate, PA) as substrate in vitro, but can efficiently hydrolyze phosphatidylinositol (1,2-diacyl-sn-glycero-3-phospho-(1D-myo-inositol), PI), as well as a range of other glycerophospholipid substrates such as phosphatidylcholine (1,2-diacyl-sn-glycero-3-phosphocholine, PC), phosphatidylethanolamine (1,2-diacyl-sn-glycero-3-phosphoethanolamine, PE), phosphatidylserine (1,2-diacyl-sn-glycero-3-phospho-L-serine, PS) and phosphatidylglycerol (1,2-diacyl-sn-glycero-3-phospho-(1'-sn-glycerol), PG). Involved in the regulation of the endogenous content of polyunsaturated PI and PS lipids in the nervous system. Changes in these lipids extend to downstream metabolic products like PI phosphates PIP and PIP2, which play fundamental roles in cell biology. Regulates mitochondrial morphology. These dynamic changes may be due to PA hydrolysis at the mitochondrial surface. May play a regulatory role in spermatogenesis or sperm function. The protein is Phospholipase DDHD1 of Homo sapiens (Human).